The following is a 211-amino-acid chain: RING finger protein narya (211 aa).

The RING-type zinc-finger motif lies at C6–C47. The tract at residues R149–L211 is disordered. Basic and acidic residues predominate over residues S153–E165. Residues S172–D184 show a composition bias toward low complexity.

In terms of assembly, may interact with itself, with nenya and vilya through its RING-type zinc finger. As to expression, expressed in nurse cell and pro-oocytes (at protein level).

The protein resides in the chromosome. Functionally, required for the formation of DNA double-strand breaks (DSBs) together with nenya and vilya during the meiotic recombination process. Plays a role in DSBs processing into crossovers. Plays a redundant role with nenya in chromosome segregation during female meiosis. This is RING finger protein narya from Drosophila melanogaster (Fruit fly).